We begin with the raw amino-acid sequence, 112 residues long: C-type natriuretic peptide 3 (112 aa).

The first 19 residues, 1 to 19 (MSLRAFMLCVCLLLQSVGA), serve as a signal peptide directing secretion. The propeptide occupies 20–90 (RPASELQNLE…SKRSWGRYKK (71 aa)). Residues 33–67 (QDQLSSTEHPEEDRLDRTREEPQLGGSSSREAADE) form a disordered region. Positions 40 to 54 (EHPEEDRLDRTREEP) are enriched in basic and acidic residues. Cys96 and Cys112 are oxidised to a cystine.

This sequence belongs to the natriuretic peptide family. As to expression, spinal cord, kidney, ovary, heart and spleen, and to a lower extent in brain and liver.

It localises to the secreted. Its function is as follows. Exhibits natriuretic and vasodepressant activity. Has cGMP-stimulating activity. May help to regulate body fluid homeostasis in a variety of aquatic environments. The chain is C-type natriuretic peptide 3 from Oryzias latipes (Japanese rice fish).